A 130-amino-acid chain; its full sequence is Small ribosomal subunit protein uS11c (130 aa).

The protein belongs to the universal ribosomal protein uS11 family. In terms of assembly, part of the 30S ribosomal subunit.

It is found in the plastid. It localises to the chloroplast. The polypeptide is Small ribosomal subunit protein uS11c (Anthoceros angustus (Hornwort)).